The following is a 40-amino-acid chain: Large ribosomal subunit protein bL36 (40 aa).

The protein belongs to the bacterial ribosomal protein bL36 family.

This chain is Large ribosomal subunit protein bL36, found in Corynebacterium diphtheriae (strain ATCC 700971 / NCTC 13129 / Biotype gravis).